The chain runs to 365 residues: Cobalt-precorrin-5B C(1)-methyltransferase (365 aa).

Belongs to the CbiD family.

The catalysed reaction is Co-precorrin-5B + S-adenosyl-L-methionine = Co-precorrin-6A + S-adenosyl-L-homocysteine. It functions in the pathway cofactor biosynthesis; adenosylcobalamin biosynthesis; cob(II)yrinate a,c-diamide from sirohydrochlorin (anaerobic route): step 6/10. In terms of biological role, catalyzes the methylation of C-1 in cobalt-precorrin-5B to form cobalt-precorrin-6A. The sequence is that of Cobalt-precorrin-5B C(1)-methyltransferase from Pseudomonas fluorescens (strain ATCC BAA-477 / NRRL B-23932 / Pf-5).